The primary structure comprises 233 residues: 7-cyano-7-deazaguanine synthase (233 aa).

Residue 8–18 (FSGGQDSTTCL) coordinates ATP. 4 residues coordinate Zn(2+): Cys-188, Cys-197, Cys-200, and Cys-203.

It belongs to the QueC family. Requires Zn(2+) as cofactor.

It catalyses the reaction 7-carboxy-7-deazaguanine + NH4(+) + ATP = 7-cyano-7-deazaguanine + ADP + phosphate + H2O + H(+). It functions in the pathway purine metabolism; 7-cyano-7-deazaguanine biosynthesis. Functionally, catalyzes the ATP-dependent conversion of 7-carboxy-7-deazaguanine (CDG) to 7-cyano-7-deazaguanine (preQ(0)). The chain is 7-cyano-7-deazaguanine synthase from Klebsiella pneumoniae (strain 342).